Here is a 366-residue protein sequence, read N- to C-terminus: Histidinol-phosphate aminotransferase (366 aa).

The residue at position 222 (K222) is an N6-(pyridoxal phosphate)lysine.

This sequence belongs to the class-II pyridoxal-phosphate-dependent aminotransferase family. Histidinol-phosphate aminotransferase subfamily. As to quaternary structure, homodimer. Requires pyridoxal 5'-phosphate as cofactor.

It carries out the reaction L-histidinol phosphate + 2-oxoglutarate = 3-(imidazol-4-yl)-2-oxopropyl phosphate + L-glutamate. Its pathway is amino-acid biosynthesis; L-histidine biosynthesis; L-histidine from 5-phospho-alpha-D-ribose 1-diphosphate: step 7/9. In Lysinibacillus sphaericus (strain C3-41), this protein is Histidinol-phosphate aminotransferase.